The primary structure comprises 238 residues: Probable septum site-determining protein MinC (238 aa).

Belongs to the MinC family. As to quaternary structure, interacts with MinD and FtsZ.

Its function is as follows. Cell division inhibitor that blocks the formation of polar Z ring septums. Rapidly oscillates between the poles of the cell to destabilize FtsZ filaments that have formed before they mature into polar Z rings. Prevents FtsZ polymerization. The chain is Probable septum site-determining protein MinC from Aeromonas salmonicida (strain A449).